A 377-amino-acid chain; its full sequence is Copper-containing nitrite reductase (377 aa).

Residues 1–35 constitute a signal peptide (tat-type signal); the sequence is MTNTLQMTRRTMLTGAAVAGALTPILTSGGGNASP. Plastocyanin-like domains follow at residues 99-194 and 259-360; these read MTFD…IMVL and GAVG…FKVT. Residues His-132, His-137, His-172, Cys-173, His-182, Met-187, and His-343 each contribute to the Cu cation site.

It belongs to the multicopper oxidase family. In terms of assembly, homotrimer. It depends on Cu(2+) as a cofactor. Cu(+) is required as a cofactor. The cofactor is FAD. In terms of processing, predicted to be exported by the Tat system. The position of the signal peptide cleavage has not been experimentally proven.

The protein localises to the periplasm. It catalyses the reaction nitric oxide + Fe(III)-[cytochrome c] + H2O = Fe(II)-[cytochrome c] + nitrite + 2 H(+). It functions in the pathway nitrogen metabolism; nitrate reduction (denitrification); dinitrogen from nitrate: step 2/4. This is Copper-containing nitrite reductase (nirK) from Rhizobium sullae (Rhizobium hedysari).